The sequence spans 382 residues: ATP phosphoribosyltransferase regulatory subunit (382 aa).

The protein belongs to the class-II aminoacyl-tRNA synthetase family. HisZ subfamily. Heteromultimer composed of HisG and HisZ subunits.

It localises to the cytoplasm. It participates in amino-acid biosynthesis; L-histidine biosynthesis; L-histidine from 5-phospho-alpha-D-ribose 1-diphosphate: step 1/9. In terms of biological role, required for the first step of histidine biosynthesis. May allow the feedback regulation of ATP phosphoribosyltransferase activity by histidine. The sequence is that of ATP phosphoribosyltransferase regulatory subunit from Burkholderia pseudomallei (strain K96243).